A 1374-amino-acid chain; its full sequence is MANTLVGRKRIRKFFGKIREVAEMPNLIEVQKASYDQFLMVDEPEGGRPDEGLQSVFKSVFPISDFSSTALLEFVKYTFEAPKYDVDECRQRGITFAAPLKVTLRLIVFDVDPDTGAKSVKDIKEQDVYMGDMPLMTENGTFIVNGTERVIVSQMHRSPGVFFDHDKGKTHSSGKLLFAARIIPYRGSWLDVEFDAKDIVYARIDRKRKIPVTSLLFALGLDGEEILSTFYNRISYTRDGADWRVPYDAERLKGFKASTDLIDADSGEVVLEAGKKLTARSARQIAEKGVTALRATDEDLIGQYIAEDMVNYKTGEIYAEAGDEISEKLLKGLADVGIEEIPVLDIDHVNVGPYIRNTLAVDKNSNREGALFDIYRVMRPGEPPTLDTAEAMFHSLFFDAERYDLSAVGRVKMNMRLDLDAPDTMRTLRRDDMLAVVKALVDLRDGKGEIDDIDHLGNRRVRSVGELMENQYRLGLLRMERAIKERMSSVDIDTVMPQDLINAKPAAAAVREFFGSSQLSQFMDQTNPLSEVTHKRRLSALGPGGLTRERAGFEVRDVHPTHYGRICPIETPEGPNIGLINSLATFARVNKYGFIETPFRRVKNGVVTDEVVYLSAMEEARYYVAQASAAMDENRRLTEDLVVCRRAGEVIVVAPDRVDLMDVSPKQLVSVAAALIPFLENDDANRALMGSNMQRQAVPLVRADAPFVGTGMESVVARDSGAAIAARRSGIVDQVDATRIVIRATEETDPTKPGVDIYRLQKFQRSNQSTCITQKPLVRVGEQVGKGDIIADGPSTEFGELALGRNVLVAFMPWNGYNFEDSILLSERIVKDDVFTSIHIEEFEVMARDTKLGPEEITRDIPNVSEEALKNLDEAGIVYIGAEVHAGDILVGKITPKGESPMTPEEKLLRAIFGEKASDVRDTSLRVPPGVTGTIVEVRVFNRHGVDKDERAQAIEREEIERLAKDRDDEQAILDRNTYARLADVLVGQAPVAGPKGFKKDTVLTREGLADYPRSQWWQFAVVDDRLMTEIEAMQKQYDESKKRLEQRFLDKVEKLQRGDELPPGVMKMVKVFVAVKRKIQPGDKMAGRHGNKGVVSRIVPIEDMPFLEDGTHADIVLNPLGVPSRMNVGQILETHLGWAAAGLGRQVAQAVDAYLRSHDATPLREQMRRIYSEAELDGLSDQDLAEIGNNLRRGVPMATPVFNGAKEADIEAMLEMAGLDRSGQSTLYDGRTGEPFDRKVTVGYIYMLKLHHLVDDKIHARSIGPYSLVTQQPLGGKAQFGGQRFGEMEVWALEAYGAAYTLQEMLTVKSDDVAGRTKVYEAIVRGDDTFEAGIPESFNVLVKEMRSLGLNVELISSKRAANDQLEAPPEAAE.

Belongs to the RNA polymerase beta chain family. As to quaternary structure, the RNAP catalytic core consists of 2 alpha, 1 beta, 1 beta' and 1 omega subunit. When a sigma factor is associated with the core the holoenzyme is formed, which can initiate transcription.

The catalysed reaction is RNA(n) + a ribonucleoside 5'-triphosphate = RNA(n+1) + diphosphate. DNA-dependent RNA polymerase catalyzes the transcription of DNA into RNA using the four ribonucleoside triphosphates as substrates. This chain is DNA-directed RNA polymerase subunit beta, found in Methylobacterium nodulans (strain LMG 21967 / CNCM I-2342 / ORS 2060).